Here is a 499-residue protein sequence, read N- to C-terminus: Multiphosphoryl transfer protein (499 aa).

Residues 2–142 (LELSESNIHL…AEFCAILMGE (141 aa)) enclose the PTS EIIA type-2 domain. His-62 acts as the Tele-phosphohistidine intermediate; for EIIA activity in catalysis. At His-62 the chain carries Phosphohistidine; by HPr. A m domain region spans residues 155-285 (SLDVNTQSLL…SDVETQSVEG (131 aa)). The 91-residue stretch at 286–376 (AVVGTFTIRN…KAIANGLGEN (91 aa)) folds into the HPr 1 domain. The active-site Pros-phosphohistidine intermediate; for HPr 1 activity is the His-300. Residue His-300 is modified to Phosphohistidine. Residues 378–409 (SAVPPSEPDTIEIMGDQIHTPAVTEDDNLPAN) are linker. The 90-residue stretch at 410–499 (AIEAVFVIKN…GAVIESGLGE (90 aa)) folds into the HPr 2 domain. A Phosphohistidine modification is found at His-424. His-424 functions as the Pros-phosphohistidine intermediate; for HPr 2 activity in the catalytic mechanism.

The protein resides in the cytoplasm. Functionally, the phosphoenolpyruvate-dependent sugar phosphotransferase system (sugar PTS), a major carbohydrate active transport system, catalyzes the phosphorylation of incoming sugar substrates concomitantly with their translocation across the cell membrane. The enzyme II FruAB PTS system is involved in fructose transport. This Haemophilus influenzae (strain ATCC 51907 / DSM 11121 / KW20 / Rd) protein is Multiphosphoryl transfer protein (fruB).